Reading from the N-terminus, the 238-residue chain is Zwei Ig domain protein zig-2 (238 aa).

The signal sequence occupies residues 1–17 (MLKFTAISFVLLNAAES). The Ig-like C2-type 1 domain occupies 31-130 (PLLKFTRTPN…NGLTKLEHVA (100 aa)). Asparagine 40 and asparagine 43 each carry an N-linked (GlcNAc...) asparagine glycan. A disulfide bond links cysteine 54 and cysteine 117. N-linked (GlcNAc...) asparagine glycans are attached at residues asparagine 137, asparagine 206, and asparagine 216. The Ig-like C2-type 2 domain occupies 149 to 230 (PFISMTVDFR…NHFGETTAIT (82 aa)). A disulfide bridge links cysteine 170 with cysteine 217.

Expressed in PVT neurons and weakly in some head neurons.

Its subcellular location is the secreted. Probably not involved in maintaining the position of ASI and ASH head neuron cell bodies and ventral nerve cord axons of PVQ, PVP, RMEV, AVK and HSN neurons. The chain is Zwei Ig domain protein zig-2 from Caenorhabditis elegans.